Consider the following 531-residue polypeptide: Fatty acid--[acyl-carrier-protein] ligase MmaC (531 aa).

T169 serves as a coordination point for Mg(2+). The ATP site is built by I218, V308, and S312. Mg(2+) is bound at residue E313. Residue D403 participates in ATP binding.

The protein belongs to the ATP-dependent AMP-binding enzyme family. Mg(2+) serves as cofactor.

It catalyses the reaction a (2E)-enoyl fatty acid + holo-[ACP] + ATP = a (2E)-enoyl-[ACP] + AMP + diphosphate. It carries out the reaction a (2E)-enoyl fatty acid + ATP + H(+) = a (2E)-2-fatty-enoyl-AMP + diphosphate. The enzyme catalyses a (2E)-2-fatty-enoyl-AMP + holo-[ACP] = a (2E)-enoyl-[ACP] + AMP + H(+). The catalysed reaction is (2E)-decenoate + holo-[ACP] + ATP = (2E)-decenoyl-[ACP] + AMP + diphosphate. It catalyses the reaction a (3R)-3-isocyanyl-fatty acid + holo-[ACP] + ATP = a (3R)-3-isocyanyl-fatty acyl-[ACP] + AMP + diphosphate. It carries out the reaction a (3R)-3-isocyanyl-fatty acid + ATP + H(+) = a (3R)-3-isocyanyl-fatty acyl-AMP + diphosphate. The enzyme catalyses a (3R)-3-isocyanyl-fatty acyl-AMP + holo-[ACP] = a (3R)-3-isocyanyl-fatty acyl-[ACP] + AMP + H(+). In terms of biological role, acyl:acyl-carrier protein ligase involved in the biosynthesis of a unique class of isonitrile lipopeptides (INLPs) that seem to play a role in metal acquisition in M.marinum. Acts twice during the INLP pathway, catalyzing the activation of (2E)-2-decenoate as well as probably the corresponding (3R)-3-isocyanyl-fatty acid as acyl-adenylates (acyl-AMP), and then the acyl transfer to the dedicated acyl-carrier protein MmaB. The sequence is that of Fatty acid--[acyl-carrier-protein] ligase MmaC from Mycobacterium marinum (strain ATCC BAA-535 / M).